Reading from the N-terminus, the 293-residue chain is ATP phosphoribosyltransferase (293 aa).

Belongs to the ATP phosphoribosyltransferase family. Long subfamily. It depends on Mg(2+) as a cofactor.

The protein resides in the cytoplasm. It carries out the reaction 1-(5-phospho-beta-D-ribosyl)-ATP + diphosphate = 5-phospho-alpha-D-ribose 1-diphosphate + ATP. Its pathway is amino-acid biosynthesis; L-histidine biosynthesis; L-histidine from 5-phospho-alpha-D-ribose 1-diphosphate: step 1/9. With respect to regulation, feedback inhibited by histidine. Catalyzes the condensation of ATP and 5-phosphoribose 1-diphosphate to form N'-(5'-phosphoribosyl)-ATP (PR-ATP). Has a crucial role in the pathway because the rate of histidine biosynthesis seems to be controlled primarily by regulation of HisG enzymatic activity. In Nitratidesulfovibrio vulgaris (strain DSM 19637 / Miyazaki F) (Desulfovibrio vulgaris), this protein is ATP phosphoribosyltransferase.